Consider the following 223-residue polypeptide: Large ribosomal subunit protein uL3 (223 aa).

Belongs to the universal ribosomal protein uL3 family. In terms of assembly, part of the 50S ribosomal subunit. Forms a cluster with proteins L14 and L19.

Functionally, one of the primary rRNA binding proteins, it binds directly near the 3'-end of the 23S rRNA, where it nucleates assembly of the 50S subunit. This Mycoplasma capricolum subsp. capricolum (strain California kid / ATCC 27343 / NCTC 10154) protein is Large ribosomal subunit protein uL3.